Reading from the N-terminus, the 329-residue chain is Ketol-acid reductoisomerase (NADP(+)) (329 aa).

The 180-residue stretch at 2 to 181 (MKKYYESDAD…GATRAVVLET (180 aa)) folds into the KARI N-terminal Rossmann domain. NADP(+) is bound by residues 25 to 28 (YGSQ), R48, S52, and 82 to 85 (DELQ). H107 is an active-site residue. G133 is an NADP(+) binding site. In terms of domain architecture, KARI C-terminal knotted spans 182-327 (TFREETETDL…KEVRAMMPQF (146 aa)). 4 residues coordinate Mg(2+): D190, E194, E226, and E230. S251 contacts substrate.

Belongs to the ketol-acid reductoisomerase family. It depends on Mg(2+) as a cofactor.

It catalyses the reaction (2R)-2,3-dihydroxy-3-methylbutanoate + NADP(+) = (2S)-2-acetolactate + NADPH + H(+). It carries out the reaction (2R,3R)-2,3-dihydroxy-3-methylpentanoate + NADP(+) = (S)-2-ethyl-2-hydroxy-3-oxobutanoate + NADPH + H(+). It functions in the pathway amino-acid biosynthesis; L-isoleucine biosynthesis; L-isoleucine from 2-oxobutanoate: step 2/4. It participates in amino-acid biosynthesis; L-valine biosynthesis; L-valine from pyruvate: step 2/4. In terms of biological role, involved in the biosynthesis of branched-chain amino acids (BCAA). Catalyzes an alkyl-migration followed by a ketol-acid reduction of (S)-2-acetolactate (S2AL) to yield (R)-2,3-dihydroxy-isovalerate. In the isomerase reaction, S2AL is rearranged via a Mg-dependent methyl migration to produce 3-hydroxy-3-methyl-2-ketobutyrate (HMKB). In the reductase reaction, this 2-ketoacid undergoes a metal-dependent reduction by NADPH to yield (R)-2,3-dihydroxy-isovalerate. In Methanoregula boonei (strain DSM 21154 / JCM 14090 / 6A8), this protein is Ketol-acid reductoisomerase (NADP(+)).